The following is a 133-amino-acid chain: Protein U17 (133 aa).

The chain crosses the membrane as a helical span at residues 82–102 (FVSVLWCVILVFVVKIKLFFL).

It is found in the membrane. This is Protein U17 (U17/U16) from Homo sapiens (Human).